The primary structure comprises 789 residues: Phenylalanine--tRNA ligase beta subunit (789 aa).

The 114-residue stretch at Lys38–Phe151 folds into the tRNA-binding domain. One can recognise a B5 domain in the interval His398–Glu474. Asp452, Asp458, Glu461, and Glu462 together coordinate Mg(2+). In terms of domain architecture, FDX-ACB spans Leu694 to Arg787.

It belongs to the phenylalanyl-tRNA synthetase beta subunit family. Type 1 subfamily. In terms of assembly, tetramer of two alpha and two beta subunits. Mg(2+) serves as cofactor.

It is found in the cytoplasm. It catalyses the reaction tRNA(Phe) + L-phenylalanine + ATP = L-phenylalanyl-tRNA(Phe) + AMP + diphosphate + H(+). The sequence is that of Phenylalanine--tRNA ligase beta subunit from Ehrlichia ruminantium (strain Welgevonden).